Consider the following 200-residue polypeptide: MQLNVNDAQAIEVSELTFGGEFNETLVHQAVVAYMAGGRQGSKQQKTRSDVRGGGKRPWRQKGTGRARAGTIRSPIWRGGGTTFAARPQDHSQKLNKKMYRAALRSILAELVRTDRLVVVQDFAVESPKTKDLLGKLNNMSLTDVLIVSEAVDQNLYLAARNLPHVDVRDVQGSDPVSLIAYDKVLITVSAVKKFEELLG.

The interval 38–68 (GRQGSKQQKTRSDVRGGGKRPWRQKGTGRAR) is disordered. The segment covering 54-65 (GGKRPWRQKGTG) has biased composition (basic residues).

It belongs to the universal ribosomal protein uL4 family. In terms of assembly, part of the 50S ribosomal subunit.

In terms of biological role, one of the primary rRNA binding proteins, this protein initially binds near the 5'-end of the 23S rRNA. It is important during the early stages of 50S assembly. It makes multiple contacts with different domains of the 23S rRNA in the assembled 50S subunit and ribosome. Its function is as follows. Forms part of the polypeptide exit tunnel. In Pseudomonas fluorescens (strain SBW25), this protein is Large ribosomal subunit protein uL4.